Reading from the N-terminus, the 453-residue chain is Na(+)/H(+) antiporter NhaA (453 aa).

The next 12 helical transmembrane spans lie at 27 to 47 (FLHI…AALM), 78 to 98 (LHFW…GMEI), 114 to 134 (ILPI…YFSF), 143 to 163 (GWAV…ALLG), 172 to 192 (IILL…IAFF), 201 to 221 (GLVI…IGFA), 222 to 242 (SAWL…VTGI), 249 to 269 (VILG…PLTI), 316 to 336 (PWVA…VSFA), 346 to 366 (FLIV…GIIT), 385 to 405 (WAGI…SIFV), and 421 to 441 (IGVL…GLIY).

The protein belongs to the NhaA Na(+)/H(+) (TC 2.A.33) antiporter family.

The protein localises to the cell inner membrane. The enzyme catalyses Na(+)(in) + 2 H(+)(out) = Na(+)(out) + 2 H(+)(in). In terms of biological role, na(+)/H(+) antiporter that extrudes sodium in exchange for external protons. This is Na(+)/H(+) antiporter NhaA from Bartonella henselae (strain ATCC 49882 / DSM 28221 / CCUG 30454 / Houston 1) (Rochalimaea henselae).